Here is a 394-residue protein sequence, read N- to C-terminus: Histidinol dehydrogenase (394 aa).

Residues Tyr-113, Gln-172, and Asn-195 each coordinate NAD(+). Substrate is bound by residues Thr-218, Gln-240, and His-243. The Zn(2+) site is built by Gln-240 and His-243. Catalysis depends on proton acceptor residues Glu-294 and His-295. The substrate site is built by His-295, Asp-327, Glu-380, and His-385. Residue Asp-327 coordinates Zn(2+). Zn(2+) is bound at residue His-385.

This sequence belongs to the histidinol dehydrogenase family. Zn(2+) serves as cofactor.

The enzyme catalyses L-histidinol + 2 NAD(+) + H2O = L-histidine + 2 NADH + 3 H(+). It participates in amino-acid biosynthesis; L-histidine biosynthesis; L-histidine from 5-phospho-alpha-D-ribose 1-diphosphate: step 9/9. Functionally, catalyzes the sequential NAD-dependent oxidations of L-histidinol to L-histidinaldehyde and then to L-histidine. The protein is Histidinol dehydrogenase of Sulfurisphaera tokodaii (strain DSM 16993 / JCM 10545 / NBRC 100140 / 7) (Sulfolobus tokodaii).